Here is a 100-residue protein sequence, read N- to C-terminus: Urease subunit gamma (100 aa).

This sequence belongs to the urease gamma subunit family. As to quaternary structure, heterotrimer of UreA (gamma), UreB (beta) and UreC (alpha) subunits. Three heterotrimers associate to form the active enzyme.

It localises to the cytoplasm. The enzyme catalyses urea + 2 H2O + H(+) = hydrogencarbonate + 2 NH4(+). The protein operates within nitrogen metabolism; urea degradation; CO(2) and NH(3) from urea (urease route): step 1/1. The polypeptide is Urease subunit gamma (Stutzerimonas stutzeri (strain A1501) (Pseudomonas stutzeri)).